Consider the following 754-residue polypeptide: 5-methyltetrahydropteroyltriglutamate--homocysteine methyltransferase (754 aa).

5-methyltetrahydropteroyltri-L-glutamate-binding positions include 17–20 and Lys-110; that span reads RELK. Residues 421 to 423 and Glu-474 contribute to the L-homocysteine site; that span reads IGS. Residues 421-423 and Glu-474 contribute to the L-methionine site; that span reads IGS. Residues 505 to 506 and Trp-551 each bind 5-methyltetrahydropteroyltri-L-glutamate; that span reads RC. Asp-589 lines the L-homocysteine pocket. Asp-589 lines the L-methionine pocket. Glu-595 serves as a coordination point for 5-methyltetrahydropteroyltri-L-glutamate. Zn(2+) contacts are provided by His-631, Cys-633, and Glu-655. His-684 serves as the catalytic Proton donor. Residue Cys-716 participates in Zn(2+) binding.

This sequence belongs to the vitamin-B12 independent methionine synthase family. The cofactor is Zn(2+).

The enzyme catalyses 5-methyltetrahydropteroyltri-L-glutamate + L-homocysteine = tetrahydropteroyltri-L-glutamate + L-methionine. It participates in amino-acid biosynthesis; L-methionine biosynthesis via de novo pathway; L-methionine from L-homocysteine (MetE route): step 1/1. Functionally, catalyzes the transfer of a methyl group from 5-methyltetrahydrofolate to homocysteine resulting in methionine formation. This chain is 5-methyltetrahydropteroyltriglutamate--homocysteine methyltransferase, found in Synechococcus sp. (strain JA-2-3B'a(2-13)) (Cyanobacteria bacterium Yellowstone B-Prime).